The primary structure comprises 340 residues: Putative pyridoxal kinase C18.10 (340 aa).

2 residues coordinate substrate: Ser19 and Tyr130. ATP contacts are provided by residues 189-190 and 218-230; these read TS and QFPS…TGTG. Asp231 provides a ligand contact to substrate.

Belongs to the pyridoxine kinase family. A divalent metal cation is required as a cofactor.

The protein resides in the cytoplasm. The protein localises to the nucleus. It carries out the reaction pyridoxal + ATP = pyridoxal 5'-phosphate + ADP + H(+). Functionally, required for synthesis of pyridoxal-5-phosphate from vitamin B6. This chain is Putative pyridoxal kinase C18.10, found in Schizosaccharomyces pombe (strain 972 / ATCC 24843) (Fission yeast).